The following is a 375-amino-acid chain: Protein GOLM2 (375 aa).

Residues 1–12 (MVGFGANRRGGR) are Cytoplasmic-facing. A helical; Signal-anchor for type II membrane protein transmembrane segment spans residues 13–33 (LPSFLLAALLLVIAVLAFNCW). Residues 34 to 198 (NAASRQAVLR…REQKATQRIQ (165 aa)) adopt a coiled-coil conformation. Residues 34–375 (NAASRQAVLR…SKPRFGDGVL (342 aa)) are Lumenal-facing. Disordered regions lie at residues 81–102 (LEQK…DGQV), 193–327 (ATQR…DSQN), and 342–375 (RAVG…DGVL). 2 stretches are compositionally biased toward basic and acidic residues: residues 193-204 (ATQRIQSSKDAE) and 350-375 (KQND…DGVL).

Belongs to the GOLM family.

It is found in the membrane. This chain is Protein GOLM2 (GOLM2), found in Gallus gallus (Chicken).